A 730-amino-acid chain; its full sequence is Elongation factor 2 (730 aa).

The 242-residue stretch at 19-260 (QRIRNIGIVA…MVIHFLPNPL (242 aa)) folds into the tr-type G domain. GTP-binding positions include 28 to 35 (AHIDHGKT), 94 to 98 (DTPGH), and 148 to 151 (NKVD). His-596 carries the post-translational modification Diphthamide.

The protein belongs to the TRAFAC class translation factor GTPase superfamily. Classic translation factor GTPase family. EF-G/EF-2 subfamily.

The protein localises to the cytoplasm. Its function is as follows. Catalyzes the GTP-dependent ribosomal translocation step during translation elongation. During this step, the ribosome changes from the pre-translocational (PRE) to the post-translocational (POST) state as the newly formed A-site-bound peptidyl-tRNA and P-site-bound deacylated tRNA move to the P and E sites, respectively. Catalyzes the coordinated movement of the two tRNA molecules, the mRNA and conformational changes in the ribosome. In Methanosarcina mazei (strain ATCC BAA-159 / DSM 3647 / Goe1 / Go1 / JCM 11833 / OCM 88) (Methanosarcina frisia), this protein is Elongation factor 2.